We begin with the raw amino-acid sequence, 252 residues long: Sulfoacetaldehyde reductase 2 (252 aa).

6 to 30 (LITGATSGFGRAAARRFADAGWSLI) provides a ligand contact to NADP(+). Ser-139 provides a ligand contact to substrate. Tyr-152 (proton acceptor) is an active-site residue.

Belongs to the short-chain dehydrogenases/reductases (SDR) family. In terms of assembly, homodimer and heterotetramer.

It carries out the reaction 2-hydroxyethane-1-sulfonate + NADP(+) = sulfoacetaldehyde + NADPH + H(+). Its pathway is organosulfur degradation. Catalyzes the formation of isethionate from 2-sulfoacetaldehyde in the deaminative pathway of taurine. Constitutively expressed enzyme that only mediates a small part of the activity observed in taurine-grown cells. The protein is Sulfoacetaldehyde reductase 2 (isfD2) of Chromohalobacter salexigens (strain ATCC BAA-138 / DSM 3043 / CIP 106854 / NCIMB 13768 / 1H11).